A 241-amino-acid polypeptide reads, in one-letter code: Small ribosomal subunit protein eS4 (241 aa).

In terms of domain architecture, S4 RNA-binding spans 37 to 100 (LPIVVWARDQ…GKHYRILRDK (64 aa)).

The protein belongs to the eukaryotic ribosomal protein eS4 family.

The polypeptide is Small ribosomal subunit protein eS4 (Methanospirillum hungatei JF-1 (strain ATCC 27890 / DSM 864 / NBRC 100397 / JF-1)).